Reading from the N-terminus, the 151-residue chain is Large ribosomal subunit protein uL15 (151 aa).

The disordered stretch occupies residues Met1–Leu60.

The protein belongs to the universal ribosomal protein uL15 family. Part of the 50S ribosomal subunit.

In terms of biological role, binds to the 23S rRNA. This Streptomyces avermitilis (strain ATCC 31267 / DSM 46492 / JCM 5070 / NBRC 14893 / NCIMB 12804 / NRRL 8165 / MA-4680) protein is Large ribosomal subunit protein uL15.